We begin with the raw amino-acid sequence, 237 residues long: 2-C-methyl-D-erythritol 4-phosphate cytidylyltransferase (237 aa).

This sequence belongs to the IspD/TarI cytidylyltransferase family. IspD subfamily. In terms of assembly, homodimer.

It catalyses the reaction 2-C-methyl-D-erythritol 4-phosphate + CTP + H(+) = 4-CDP-2-C-methyl-D-erythritol + diphosphate. It participates in isoprenoid biosynthesis; isopentenyl diphosphate biosynthesis via DXP pathway; isopentenyl diphosphate from 1-deoxy-D-xylulose 5-phosphate: step 2/6. Catalyzes the formation of 4-diphosphocytidyl-2-C-methyl-D-erythritol from CTP and 2-C-methyl-D-erythritol 4-phosphate (MEP). This chain is 2-C-methyl-D-erythritol 4-phosphate cytidylyltransferase, found in Pectobacterium atrosepticum (strain SCRI 1043 / ATCC BAA-672) (Erwinia carotovora subsp. atroseptica).